The following is a 345-amino-acid chain: Nuclear distribution protein nudE-like 1 (345 aa).

Positions 28 to 190 form a coiled coil; sequence QSFQEARDEL…LAVRERQQEV (163 aa). A self-association region spans residues 56-166; it reads VQAEQRNRDL…LDEKESLLVS (111 aa). Residues 64 to 189 form an interaction with KATNB1 region; it reads DLQADNQRLK…ELAVRERQQE (126 aa). A required for interaction with PAFAH1B1 region spans residues 114–133; it reads YVRELEQANDDLERAKRATI. The tract at residues 175 to 345 is interaction with CENPF; the sequence is RDLRQELAVR…SAPGMLPLSV (171 aa). Residues 189–256 form an interaction with YWHAE region; the sequence is EVTRKSAPSS…SARISALNIV (68 aa). An interaction with NEFL region spans residues 191-345; sequence TRKSAPSSPT…SAPGMLPLSV (155 aa). The segment at 195–256 is interaction with KATNA1; that stretch reads APSSPTLDCE…SARISALNIV (62 aa). Position 215 is a phosphoserine (Ser-215). Residue Thr-219 is modified to Phosphothreonine; by CDK1 and MAPK1. Ser-231 is subject to Phosphoserine. The segment at 241–280 is interaction with DISC1; the sequence is TSPLTPSARISALNIVGDLLRKVGALESKLAACRNFAKDQ. The residue at position 242 (Ser-242) is a Phosphoserine; by CDK1. Thr-245 carries the phosphothreonine; by CDK1 and MAPK1 modification. The tract at residues 256–291 is required for localization to the centrosome and interaction with dynein, dynactin, tubulin gamma, PCM1 and PCNT; it reads VGDLLRKVGALESKLAACRNFAKDQASRKSYISGNV. The S-palmitoyl cysteine; by ZDHHC2, ZDHHC3 and ZDHHC7 moiety is linked to residue Cys-273. Residues 315-345 form a disordered region; the sequence is GAVNGFDPAPPPPGLGSSRPSSAPGMLPLSV. Residues 329–339 are compositionally biased toward low complexity; sequence LGSSRPSSAPG. Ser-344 carries the phosphoserine modification.

Belongs to the nudE family. In terms of assembly, self-associates. Interacts with DISC1, dynein, dynactin, tubulin gamma, KATNA1, KATNB1, microtubules, PAFAH1B1, PCM1, PCNT, and YWHAE. Interacts directly with NEFL and indirectly with NEFH. Interacts (via C-terminus) with CENPF. Interacts with ZNF365. Interacts with PLEKHM1 (via N- and C-terminus). Interacts with GTP-bound RAB9A; the interaction may lead to RAB9A-dynein motor tethering. Post-translationally, phosphorylated in mitosis. Can be phosphorylated by CDK1, CDK5 and MAPK1. Phosphorylation by CDK5 promotes interaction with KATNA1 and YWHAE. Palmitoylation at Cys-273 reduces affinity for dynein.

It localises to the cytoplasm. The protein resides in the cytoskeleton. It is found in the microtubule organizing center. The protein localises to the centrosome. Its subcellular location is the chromosome. It localises to the centromere. The protein resides in the kinetochore. It is found in the spindle. In terms of biological role, required for organization of the cellular microtubule array and microtubule anchoring at the centrosome. May regulate microtubule organization at least in part by targeting the microtubule severing protein KATNA1 to the centrosome. Also positively regulates the activity of the minus-end directed microtubule motor protein dynein. May enhance dynein-mediated microtubule sliding by targeting dynein to the microtubule plus ends. Required for several dynein- and microtubule-dependent processes such as the maintenance of Golgi integrity, the centripetal motion of secretory vesicles and the coupling of the nucleus and centrosome. Also required during brain development for the migration of newly formed neurons from the ventricular/subventricular zone toward the cortical plate. Plays a role, together with DISC1, in the regulation of neurite outgrowth. Required for mitosis in some cell types but appears to be dispensible for mitosis in cortical neuronal progenitors, which instead requires NDE1. Facilitates the polymerization of neurofilaments from the individual subunits NEFH and NEFL. Positively regulates lysosome peripheral distribution and ruffled border formation in osteoclasts. Plays a role, together with DISC1, in the regulation of neurite outgrowth. May act as a RAB9A/B effector that tethers RAB9-associated late endosomes to the dynein motor for their retrograde transport to the trans-Golgi network. This is Nuclear distribution protein nudE-like 1 (NDEL1) from Pongo abelii (Sumatran orangutan).